The chain runs to 297 residues: Heme A synthase (297 aa).

Topologically, residues 1-6 (MHKRLK) are cytoplasmic. A helical membrane pass occupies residues 7–27 (IYSVITSIGVLIVLLQGALVT). At 28–62 (KTGSGEGCGATWPLCFGEVIPTNPAIETIIEYSHR) the chain is on the extracellular side. A disulfide bridge links Cys-35 with Cys-42. Glu-58 is a catalytic residue. A heme o-binding site is contributed by His-61. A helical transmembrane segment spans residues 63–83 (IVSGLVGAMIIILAIWAWKQL). Topologically, residues 84-93 (KHMREAKALS) are cytoplasmic. Residues 94–114 (FAAVILIIFQGLLGAGAVVFG) traverse the membrane as a helical segment. The Extracellular segment spans residues 115–118 (QSKA). A helical transmembrane segment spans residues 119–139 (ILALHFGISAMSLAAVVLLTI). His-123 contributes to the heme o binding site. At 140 to 156 (LAFEDGREHTMAPKVSR) the chain is on the cytoplasmic side. A helical transmembrane segment spans residues 157–177 (GFKYYVFFVITYCYAVIYSGA). Over 178-210 (YVKHSEATLACAGFPLCNGQIFPGLYGPVGAHY) the chain is Extracellular. Cys-188 and Cys-194 are oxidised to a cystine. A helical membrane pass occupies residues 211–231 (FHRVVGTILLLFLLILMIWTL). His-212 provides a ligand contact to heme b. The Cytoplasmic segment spans residues 232–242 (SRYRHYRVLTW). The helical transmembrane segment at 243–263 (TAVLSFLLVVGQFISGISIVF) threads the bilayer. Residues 264 to 271 (TQNALSVG) lie on the Extracellular side of the membrane. The helical transmembrane segment at 272–292 (LIHALIISILFSALSYMTMII) threads the bilayer. His-274 is a heme b binding site. Residues 293–297 (TRPSH) are Cytoplasmic-facing.

It belongs to the COX15/CtaA family. Type 1 subfamily. In terms of assembly, interacts with CtaB. It depends on heme b as a cofactor.

It localises to the cell membrane. It carries out the reaction Fe(II)-heme o + 2 A + H2O = Fe(II)-heme a + 2 AH2. Its pathway is porphyrin-containing compound metabolism; heme A biosynthesis; heme A from heme O: step 1/1. Catalyzes the conversion of heme O to heme A by two successive hydroxylations of the methyl group at C8. The first hydroxylation forms heme I, the second hydroxylation results in an unstable dihydroxymethyl group, which spontaneously dehydrates, resulting in the formyl group of heme A. The chain is Heme A synthase from Alkalihalophilus pseudofirmus (strain ATCC BAA-2126 / JCM 17055 / OF4) (Bacillus pseudofirmus).